The following is a 565-amino-acid chain: Formate--tetrahydrofolate ligase (565 aa).

67-74 (TPLGEGKT) is a binding site for ATP.

It belongs to the formate--tetrahydrofolate ligase family.

The enzyme catalyses (6S)-5,6,7,8-tetrahydrofolate + formate + ATP = (6R)-10-formyltetrahydrofolate + ADP + phosphate. It functions in the pathway one-carbon metabolism; tetrahydrofolate interconversion. This Saccharopolyspora erythraea (strain ATCC 11635 / DSM 40517 / JCM 4748 / NBRC 13426 / NCIMB 8594 / NRRL 2338) protein is Formate--tetrahydrofolate ligase.